A 292-amino-acid chain; its full sequence is F-box/LRR-repeat protein 15 (292 aa).

The region spanning 12–59 (LLDLPWEDVLVPHILSYLPLRHILSLQRVSKPFHSLVHIYLCNCRHFD) is the F-box domain. LRR repeat units lie at residues 134 to 155 (HLQN…RSLA), 160 to 181 (CLEA…SYLV), 186 to 207 (RLKS…EETA), 212 to 233 (DLEH…RTLA), and 238 to 259 (NLKS…GNLR).

Belongs to the FBXL15 family. Part of the SCF (SKP1-CUL1-F-box) E3 ubiquitin-protein ligase complex SCF(FBXL15).

The protein resides in the cytoplasm. Its pathway is protein modification; protein ubiquitination. Substrate recognition component of a SCF (SKP1-CUL1-F-box protein) E3 ubiquitin-protein ligase complex which mediates the ubiquitination and subsequent proteasomal degradation of target proteins. Acts as a positive regulator of the BMP signaling pathway. Required for dorsal/ventral pattern formation. This chain is F-box/LRR-repeat protein 15 (fbxl15), found in Xenopus laevis (African clawed frog).